The chain runs to 488 residues: Protein unzipped (488 aa).

The N-terminal stretch at 1-21 is a signal peptide; sequence MTSNSCLISLGLLLVLIQILA. The Extracellular portion of the chain corresponds to 22–465; sequence PAKAAEHSVF…DVALAGFGVN (444 aa). Asn35, Asn232, Asn317, and Asn374 each carry an N-linked (GlcNAc...) asparagine glycan. Residues 380 to 400 show a composition bias toward low complexity; sequence TTTTTTTTSTSTTTHATTTST. The tract at residues 380–453 is disordered; the sequence is TTTTTTTTST…EAPENMSSDP (74 aa). N-linked (GlcNAc...) asparagine glycosylation is present at Asn448. Residues 466–486 form a helical membrane-spanning segment; it reads AAGSTFIAGSALLTLLLTIFL. Topologically, residues 487 to 488 are cytoplasmic; that stretch reads SL.

It is found in the membrane. Functionally, required for normal axon patterning during neurogenesis. This Drosophila melanogaster (Fruit fly) protein is Protein unzipped (uzip).